The primary structure comprises 202 residues: Dephospho-CoA kinase (202 aa).

Residues 4–202 (VIGLTGGIAT…TDKGFINKER (199 aa)) enclose the DPCK domain. 12 to 17 (ATGKST) serves as a coordination point for ATP.

It belongs to the CoaE family.

The protein resides in the cytoplasm. The enzyme catalyses 3'-dephospho-CoA + ATP = ADP + CoA + H(+). It functions in the pathway cofactor biosynthesis; coenzyme A biosynthesis; CoA from (R)-pantothenate: step 5/5. Functionally, catalyzes the phosphorylation of the 3'-hydroxyl group of dephosphocoenzyme A to form coenzyme A. This is Dephospho-CoA kinase from Staphylococcus haemolyticus (strain JCSC1435).